A 678-amino-acid polypeptide reads, in one-letter code: Methionine--tRNA ligase (678 aa).

Positions Pro18–His28 match the 'HIGH' region motif. 4 residues coordinate Zn(2+): Cys149, Cys152, Cys162, and Cys165. The 'KMSKS' region motif lies at Lys334 to Ser338. An ATP-binding site is contributed by Lys337. Positions Asp577–Met678 constitute a tRNA-binding domain.

It belongs to the class-I aminoacyl-tRNA synthetase family. MetG type 1 subfamily. Homodimer. The cofactor is Zn(2+).

Its subcellular location is the cytoplasm. It catalyses the reaction tRNA(Met) + L-methionine + ATP = L-methionyl-tRNA(Met) + AMP + diphosphate. Its function is as follows. Is required not only for elongation of protein synthesis but also for the initiation of all mRNA translation through initiator tRNA(fMet) aminoacylation. This chain is Methionine--tRNA ligase, found in Marinobacter nauticus (strain ATCC 700491 / DSM 11845 / VT8) (Marinobacter aquaeolei).